Reading from the N-terminus, the 555-residue chain is Glutamate--tRNA ligase (555 aa).

The 'HIGH' region motif lies at 100 to 110; it reads PNPSGPLHIGH.

It belongs to the class-I aminoacyl-tRNA synthetase family. Glutamate--tRNA ligase type 2 subfamily.

It is found in the cytoplasm. It catalyses the reaction tRNA(Glu) + L-glutamate + ATP = L-glutamyl-tRNA(Glu) + AMP + diphosphate. Its function is as follows. Catalyzes the attachment of glutamate to tRNA(Glu) in a two-step reaction: glutamate is first activated by ATP to form Glu-AMP and then transferred to the acceptor end of tRNA(Glu). The polypeptide is Glutamate--tRNA ligase (Methanococcus maripaludis (strain C5 / ATCC BAA-1333)).